The following is a 456-amino-acid chain: uncharacterized protein (456 aa).

One can recognise a TRAM domain in the interval Thr3–Glu61. [4Fe-4S] cluster-binding residues include Cys74, Cys80, Cys83, and Cys162. S-adenosyl-L-methionine-binding residues include Gln286, Tyr315, Glu336, and Asp384. Cys411 acts as the Nucleophile in catalysis.

This sequence belongs to the class I-like SAM-binding methyltransferase superfamily. RNA M5U methyltransferase family.

This is an uncharacterized protein from Staphylococcus epidermidis (strain ATCC 12228 / FDA PCI 1200).